The sequence spans 2082 residues: Probable ATP-dependent helicase PF08_0048 (2082 aa).

Positions 66-138 (KIVEPAKTPE…EEKRLKLYSK (73 aa)) constitute an HSA domain. The span at 209–221 (NNSEIVNNNASSV) shows a compositional bias: low complexity. 2 disordered regions span residues 209–234 (NNSEIVNNNASSVDNGDKELKEDDLT) and 301–470 (NVIE…SPTR). Basic and acidic residues-rich tracts occupy residues 419-448 (NSDHQSDQEQFNHETKDDIIKNSSYEHIDN) and 455-465 (TGEDYKSDKEN). Residues 476 to 531 (KKEKYDEYDTKLKIEKREEENKNYEKDEHEYESDNYDKEKINKKKELILLKNDIEN) adopt a coiled-coil conformation. The disordered stretch occupies residues 532-641 (DSDETSEHIK…KNDSDDNDDI (110 aa)). Residues 536–545 (TSEHIKRDSR) are compositionally biased toward basic and acidic residues. Positions 579-598 (DNNNSENDNNNDNNNDNNND) are enriched in low complexity. Residues 599-627 (NNDDNNDDNNDDNNDDNNDDNNDDNNDDN) are compositionally biased toward acidic residues. The Helicase ATP-binding domain occupies 674-839 (LYLYKNNING…WSLLHFLMPN (166 aa)). Residue 687 to 694 (DEMGLGKT) participates in ATP binding. The DEAH box motif lies at 790-793 (DEAH). The segment at 1199-1255 (EQNNNNSKDNNNNIDNNNNIDNNNNIDNNNNIDNNNNIDNNNNNIDNNNNIDNHHNN) is disordered. Positions 1772 to 1922 (ALEKLLSKCK…NICINMGNFN (151 aa)) constitute a Helicase C-terminal domain. A coiled-coil region spans residues 1972-2060 (EQVENKDKMN…DEMRMKIEIE (89 aa)).

The protein belongs to the SNF2/RAD54 helicase family. SWR1 subfamily. In terms of assembly, component of a chromatin-remodeling complex.

The protein localises to the nucleus. In terms of biological role, catalytic component of a chromatin remodeling complex. The sequence is that of Probable ATP-dependent helicase PF08_0048 from Plasmodium falciparum (isolate 3D7).